Here is a 120-residue protein sequence, read N- to C-terminus: NAD(P)H-quinone oxidoreductase subunit 3 (120 aa).

The next 3 helical transmembrane spans lie at 6-26, 64-84, and 89-109; these read GYDAFLGFLLISAAVPVLALV, MFALVFVIFDVETVFLYPWAV, and LGLLAFIEALIFIAILIVALA.

Belongs to the complex I subunit 3 family. As to quaternary structure, NDH-1 can be composed of about 15 different subunits; different subcomplexes with different compositions have been identified which probably have different functions.

It localises to the cellular thylakoid membrane. The enzyme catalyses a plastoquinone + NADH + (n+1) H(+)(in) = a plastoquinol + NAD(+) + n H(+)(out). The catalysed reaction is a plastoquinone + NADPH + (n+1) H(+)(in) = a plastoquinol + NADP(+) + n H(+)(out). In terms of biological role, NDH-1 shuttles electrons from an unknown electron donor, via FMN and iron-sulfur (Fe-S) centers, to quinones in the respiratory and/or the photosynthetic chain. The immediate electron acceptor for the enzyme in this species is believed to be plastoquinone. Couples the redox reaction to proton translocation, and thus conserves the redox energy in a proton gradient. Cyanobacterial NDH-1 also plays a role in inorganic carbon-concentration. This chain is NAD(P)H-quinone oxidoreductase subunit 3, found in Prochlorococcus marinus (strain MIT 9211).